The chain runs to 1299 residues: DNA-directed RNA polymerase subunit beta' (1299 aa).

C60, C62, C75, and C78 together coordinate Zn(2+). D535, D537, and D539 together coordinate Mg(2+). Zn(2+)-binding residues include C877, C954, C961, and C964.

This sequence belongs to the RNA polymerase beta' chain family. As to quaternary structure, the RNAP catalytic core consists of 2 alpha, 1 beta, 1 beta' and 1 omega subunit. When a sigma factor is associated with the core the holoenzyme is formed, which can initiate transcription. It depends on Mg(2+) as a cofactor. The cofactor is Zn(2+).

The enzyme catalyses RNA(n) + a ribonucleoside 5'-triphosphate = RNA(n+1) + diphosphate. In terms of biological role, DNA-dependent RNA polymerase catalyzes the transcription of DNA into RNA using the four ribonucleoside triphosphates as substrates. The protein is DNA-directed RNA polymerase subunit beta' of Pseudarthrobacter chlorophenolicus (strain ATCC 700700 / DSM 12829 / CIP 107037 / JCM 12360 / KCTC 9906 / NCIMB 13794 / A6) (Arthrobacter chlorophenolicus).